A 95-amino-acid chain; its full sequence is Exodeoxyribonuclease 7 small subunit (95 aa).

The protein belongs to the XseB family. Heterooligomer composed of large and small subunits.

It localises to the cytoplasm. It carries out the reaction Exonucleolytic cleavage in either 5'- to 3'- or 3'- to 5'-direction to yield nucleoside 5'-phosphates.. Functionally, bidirectionally degrades single-stranded DNA into large acid-insoluble oligonucleotides, which are then degraded further into small acid-soluble oligonucleotides. The polypeptide is Exodeoxyribonuclease 7 small subunit (Corynebacterium aurimucosum (strain ATCC 700975 / DSM 44827 / CIP 107346 / CN-1) (Corynebacterium nigricans)).